Reading from the N-terminus, the 244-residue chain is tRNA pseudouridine synthase A (244 aa).

Asp52 serves as the catalytic Nucleophile. Substrate is bound at residue Tyr110.

Belongs to the tRNA pseudouridine synthase TruA family. Homodimer.

It carries out the reaction uridine(38/39/40) in tRNA = pseudouridine(38/39/40) in tRNA. Functionally, formation of pseudouridine at positions 38, 39 and 40 in the anticodon stem and loop of transfer RNAs. The chain is tRNA pseudouridine synthase A from Clostridium kluyveri (strain ATCC 8527 / DSM 555 / NBRC 12016 / NCIMB 10680 / K1).